The primary structure comprises 204 residues: Inner membrane protein YagU (204 aa).

At 1 to 14 (MNIFEQTPPNRRRY) the chain is on the periplasmic side. Residues 15-35 (GLAAFIGLIAGVVSAFVKWGA) form a helical membrane-spanning segment. Over 36-100 (EVPLPPRSPV…VYTFAGHVFN (65 aa)) the chain is Cytoplasmic. A helical membrane pass occupies residues 101-121 (WVGVTHIIFSIVFAVGYCVVA). Residues 122–132 (EVFPKIKLWQG) lie on the Periplasmic side of the membrane. A helical membrane pass occupies residues 133–153 (LLAGALAQLFVHMISFPLMGL). At 154–204 (TPPLFDLPWYENVSEIFGHLVWFWSIEIIRRDLRNRITHEPDPEIPLGSNR) the chain is on the cytoplasmic side.

Homodimer.

Its subcellular location is the cell inner membrane. This Escherichia coli (strain K12) protein is Inner membrane protein YagU (yagU).